We begin with the raw amino-acid sequence, 474 residues long: tRNA modification GTPase MnmE (474 aa).

(6S)-5-formyl-5,6,7,8-tetrahydrofolate contacts are provided by Arg-28, Glu-92, and Arg-131. Positions 227–395 constitute a TrmE-type G domain; it reads GIPVAIVGTT…LKGELTQIME (169 aa). A K(+)-binding site is contributed by Asn-237. GTP-binding positions include 237–242, 256–262, 281–284, and 376–378; these read NVGKST, SDIHGTT, DTAG, and SAR. Ser-241 serves as a coordination point for Mg(2+). 3 residues coordinate K(+): Ser-256, Ile-258, and Thr-261. Thr-262 serves as a coordination point for Mg(2+). Lys-474 is a (6S)-5-formyl-5,6,7,8-tetrahydrofolate binding site.

It belongs to the TRAFAC class TrmE-Era-EngA-EngB-Septin-like GTPase superfamily. TrmE GTPase family. Homodimer. Heterotetramer of two MnmE and two MnmG subunits. K(+) is required as a cofactor.

It localises to the cytoplasm. In terms of biological role, exhibits a very high intrinsic GTPase hydrolysis rate. Involved in the addition of a carboxymethylaminomethyl (cmnm) group at the wobble position (U34) of certain tRNAs, forming tRNA-cmnm(5)s(2)U34. The polypeptide is tRNA modification GTPase MnmE (Porphyromonas gingivalis (strain ATCC BAA-308 / W83)).